A 131-amino-acid chain; its full sequence is uncharacterized protein (131 aa).

The disordered stretch occupies residues 13 to 32 (TYSPLPEPPPTPALGGQRGP).

This is an uncharacterized protein from Homo sapiens (Human).